An 813-amino-acid chain; its full sequence is Leucine--tRNA ligase (813 aa).

Residues 41 to 51 (PYPSGTLHMGH) carry the 'HIGH' region motif. Residues 575-579 (KMSKS) carry the 'KMSKS' region motif. An ATP-binding site is contributed by lysine 578.

Belongs to the class-I aminoacyl-tRNA synthetase family.

The protein resides in the cytoplasm. The enzyme catalyses tRNA(Leu) + L-leucine + ATP = L-leucyl-tRNA(Leu) + AMP + diphosphate. This chain is Leucine--tRNA ligase, found in Francisella tularensis subsp. holarctica (strain FTNF002-00 / FTA).